We begin with the raw amino-acid sequence, 158 residues long: 6,7-dimethyl-8-ribityllumazine synthase (158 aa).

5-amino-6-(D-ribitylamino)uracil contacts are provided by residues F22, 57 to 59 (AVE), and 81 to 83 (AVI). Residue 86-87 (GT) participates in (2S)-2-hydroxy-3-oxobutyl phosphate binding. Catalysis depends on H89, which acts as the Proton donor. F114 lines the 5-amino-6-(D-ribitylamino)uracil pocket. R128 serves as a coordination point for (2S)-2-hydroxy-3-oxobutyl phosphate.

This sequence belongs to the DMRL synthase family. As to quaternary structure, forms an icosahedral capsid composed of 60 subunits, arranged as a dodecamer of pentamers.

The enzyme catalyses (2S)-2-hydroxy-3-oxobutyl phosphate + 5-amino-6-(D-ribitylamino)uracil = 6,7-dimethyl-8-(1-D-ribityl)lumazine + phosphate + 2 H2O + H(+). It functions in the pathway cofactor biosynthesis; riboflavin biosynthesis; riboflavin from 2-hydroxy-3-oxobutyl phosphate and 5-amino-6-(D-ribitylamino)uracil: step 1/2. Functionally, catalyzes the formation of 6,7-dimethyl-8-ribityllumazine by condensation of 5-amino-6-(D-ribitylamino)uracil with 3,4-dihydroxy-2-butanone 4-phosphate. This is the penultimate step in the biosynthesis of riboflavin. In Shewanella oneidensis (strain ATCC 700550 / JCM 31522 / CIP 106686 / LMG 19005 / NCIMB 14063 / MR-1), this protein is 6,7-dimethyl-8-ribityllumazine synthase.